We begin with the raw amino-acid sequence, 221 residues long: MEVQKEAQRIMTLSVWKMYHSRMQRGGLRLHRSLQLSLVMRSARELYLSAKVETHQPEFPPSRRALDPRLHPPREPEAAMEAATPDVEQPPEPMDTQEEVLRVQETPALCDPPPARVSRKRRSSSDLSDGSDAGLVPSKKARLEEVEGEATSEVSNRLQLPPAQTEGAFPNLARVLQRRFSSLLNCGPAVPPPTPPTCEAKPACRPADNMLNVLVRTVVAF.

M1 carries the post-translational modification N-acetylmethionine. Residues 54–156 (THQPEFPPSR…EGEATSEVSN (103 aa)) form a disordered region. Basic and acidic residues predominate over residues 64–77 (RALDPRLHPPREPE). Positions 125 to 136 (SDLSDGSDAGLV) are enriched in low complexity.

Belongs to the IER family.

The protein resides in the cytoplasm. The protein localises to the nucleus. Its function is as follows. DNA-binding protein that seems to act as a transcription factor. Involved in the regulation of neuronal differentiation, acts upon JNK-signaling pathway activation and plays a role in neurite outgrowth in hippocampal cells. May mediate with FIBP FGF-signaling in the establishment of laterality in the embryo. Promotes cell motility, seems to stimulate tumor metastasis. This is Immediate early response gene 2 protein (Ier2) from Rattus norvegicus (Rat).